A 438-amino-acid polypeptide reads, in one-letter code: MLNTFSSVRQYLKFDLTRVVIDNIVFKLHYRWTFVILLVATLLITSRQYIGEHIQCLSDGVVSPVINTFCFFTPTFTVVRDQNQTAYRPGSEPPGIGAFDPEKDTIKRHAYYQWVPFVLFFQALCFYIPHALWKSWEGGRIKALVFGLRMVGLTRYLKNDSLRIGKLNIPSMAEAEERVKDIRRTMIDRMRLNQSWGAHLVFAEVLNLINLLLQITWTNRFLGGQFLTLGPHALKNRWSDELSVLDLVFPKITKCKFHKFGDSGSIQMHDALCVMALNIMNEKIYIILWFWYAFLLIVTVLGLLWRILTLCFYRNVTFTRWSLYWAKPGQLDENELLAVIDKCNFSNWMFLFFLRSNLSEFLFKKVIYHLASEFPNPDHDNDVNAYREAPPTPAKNRYPELSGLDTIDSPLLHLRRNGSPSAGGAQGPSTSDMAKLPV.

At 1-23 (MLNTFSSVRQYLKFDLTRVVIDN) the chain is on the cytoplasmic side. The helical transmembrane segment at 24-44 (IVFKLHYRWTFVILLVATLLI) threads the bilayer. Over 45–58 (TSRQYIGEHIQCLS) the chain is Extracellular. A helical membrane pass occupies residues 59–79 (DGVVSPVINTFCFFTPTFTVV). The Cytoplasmic portion of the chain corresponds to 80–112 (RDQNQTAYRPGSEPPGIGAFDPEKDTIKRHAYY). The chain crosses the membrane as a helical span at residues 113 to 133 (QWVPFVLFFQALCFYIPHALW). Residues 134 to 283 (KSWEGGRIKA…VMALNIMNEK (150 aa)) lie on the Extracellular side of the membrane. Residues 284–304 (IYIILWFWYAFLLIVTVLGLL) traverse the membrane as a helical segment. Residues 305–438 (WRILTLCFYR…STSDMAKLPV (134 aa)) lie on the Cytoplasmic side of the membrane. Disordered stretches follow at residues 381–402 (NDVNAYREAPPTPAKNRYPELS) and 415–438 (RRNGSPSAGGAQGPSTSDMAKLPV). Residues 418 to 431 (GSPSAGGAQGPSTS) show a composition bias toward low complexity.

Belongs to the pannexin family. As to expression, expressed around gut lobes in embryonic stages 15-17.

Its subcellular location is the cell membrane. The protein localises to the cell junction. The protein resides in the gap junction. Functionally, structural components of the gap junctions. In Drosophila melanogaster (Fruit fly), this protein is Innexin inx7 (Inx7).